The sequence spans 751 residues: MTGGPIASWRTAAQGHLTPDENGDLKTDYSRWRLLDDRGRQTWHYLESDEENEKWPQSVADKHFLGLPTVTPLAPAATNRMFAIHELPELPKAKTPLQCAENGLEFFSKLQLPPGNWACEYGGPMFLLPGLIITYYVTNTPIPPEYATEIKRYLFARQHPEDGGWGLHIEAHSSVFGTCMNYVALRLIGVSEDDPRMIKARGLLHKFGGAIYGPHWAKFWLSVLGVMEWECVNPVPPELWLLPDWVPFTPWRWWIHIRQVFLPMSYLWSKKFTHPLDPLTKQLRQELYTQPYDSISFANHRNSIHAADNYYPKTWLLNLINQLLVSVWNPYFRIPALVKRAEEWTWELIRMEDENTDYAGLGPVSNPMNMVACYLHDGPDSYSVRRHRERLNDYMWMKNEGMLMNGTNGVQVWDTAFITQAIVVAGFADDPKWRPMLTKALEFLEDHQLRENVPDQEKCYRQHRKGAWPFSNKTQGYTVSDCTAEGLRSTIQLQEMHNYPRLISVERLKDSVDCLLLMQNPSGGFTEYETTRGSEKLEWLNAAEVFGGIMIGYDYPECTTASVTALSLFSRFYPDYRADEIKAAKDKAVKYIKRVQRPDGSWYGSWGICFTYAAMFALESLASVGETYETSEYARRGCEFLLSKQKEDGGWGESYLSSEKHVYVQHEKSQVVQTAWACLALMEAEYPHKEPLQKAMKLLMSRQQPNGEWLQESIEGVFNQSCMISYPNYKFYWPIRALGLYSRKFGNEELM.

The tract at residues 1–22 is disordered; that stretch reads MTGGPIASWRTAAQGHLTPDEN. One copy of the PFTB 1 repeat lies at 147-189; that stretch reads ATEIKRYLFARQHPEDGGWGLHIEAHSSVFGTCMNYVALRLIG. Residue aspartate 481 is the Proton donor of the active site. PFTB repeat units lie at residues 508–553, 585–625, and 634–675; these read LKDS…MIGY, KDKA…ASVG, and ARRG…VQTA.

This sequence belongs to the terpene cyclase/mutase family.

It is found in the lipid droplet. The protein localises to the endoplasmic reticulum membrane. It catalyses the reaction (S)-2,3-epoxysqualene = lanosterol. It participates in steroid metabolism; ergosterol biosynthesis. Lanosterol synthase; part of the third module of ergosterol biosynthesis pathway that includes the late steps of the pathway. ERG7A and ERG7B catalyze the cyclization of (S)-2,3 oxidosqualene to lanosterol, a reaction that forms the sterol core. The third module or late pathway involves the ergosterol synthesis itself through consecutive reactions that mainly occur in the endoplasmic reticulum (ER) membrane. Firstly, the squalene synthase erg9 catalyzes the condensation of 2 farnesyl pyrophosphate moieties to form squalene, which is the precursor of all steroids. Squalene synthase is crucial for balancing the incorporation of farnesyl diphosphate (FPP) into sterol and nonsterol isoprene synthesis. Secondly, squalene is converted into lanosterol by the consecutive action of the squalene epoxidase erg1 and the lanosterol synthase erg7. Then, the delta(24)-sterol C-methyltransferase erg6 methylates lanosterol at C-24 to produce eburicol. Eburicol is the substrate of the sterol 14-alpha demethylase encoded by cyp51A and cyp51B, to yield 4,4,24-trimethyl ergosta-8,14,24(28)-trienol. The C-14 reductase erg24 then reduces the C14=C15 double bond which leads to 4,4-dimethylfecosterol. A sequence of further demethylations at C-4, involving the C-4 demethylation complex containing the C-4 methylsterol oxidases erg25A or erg25B, the sterol-4-alpha-carboxylate 3-dehydrogenase erg26 and the 3-keto-steroid reductase erg27, leads to the production of fecosterol via 4-methylfecosterol. The C-8 sterol isomerase erg2 then catalyzes the reaction which results in unsaturation at C-7 in the B ring of sterols and thus converts fecosterol to episterol. The sterol-C5-desaturase erg3B then catalyzes the introduction of a C-5 double bond in the B ring to produce 5-dehydroepisterol. The 2 other sterol-C5-desaturases, erg3A and erg3C, seem to be less important in ergosterol biosynthesis. The C-22 sterol desaturase erg5 further converts 5-dehydroepisterol into ergosta-5,7,22,24(28)-tetraen-3beta-ol by forming the C-22(23) double bond in the sterol side chain. Finally, ergosta-5,7,22,24(28)-tetraen-3beta-ol is substrate of the C-24(28) sterol reductases erg4A and erg4B to produce ergosterol. Possible alternative sterol biosynthetic pathways might exist from fecosterol to ergosterol, depending on the activities of the erg3 isoforms. This is Lanosterol synthase erg7A from Aspergillus fumigatus (strain ATCC MYA-4609 / CBS 101355 / FGSC A1100 / Af293) (Neosartorya fumigata).